The following is a 146-amino-acid chain: Hemoglobin subunit delta (146 aa).

The region spanning 2–146 is the Globin domain; it reads HLTGDEKSAV…VATALAHKYH (145 aa). Residue Ser-50 is modified to Phosphoserine. Residues His-63 and His-92 each contribute to the heme b site.

It belongs to the globin family. As to quaternary structure, heterotetramer of two delta chains and two alpha chains. Red blood cells.

In Saimiri sciureus (Common squirrel monkey), this protein is Hemoglobin subunit delta (HBD).